The chain runs to 388 residues: Succinate--CoA ligase [ADP-forming] subunit beta (388 aa).

Positions 9–244 constitute an ATP-grasp domain; it reads KAIFRSMGVA…LEEEDPKEIE (236 aa). ATP contacts are provided by residues K46, 53-55, E99, C102, and E107; that span reads GRG. Mg(2+) is bound by residues N199 and D213. Residues N264 and 321 to 323 contribute to the substrate site; that span reads GIM.

This sequence belongs to the succinate/malate CoA ligase beta subunit family. Heterotetramer of two alpha and two beta subunits. Mg(2+) serves as cofactor.

It catalyses the reaction succinate + ATP + CoA = succinyl-CoA + ADP + phosphate. The enzyme catalyses GTP + succinate + CoA = succinyl-CoA + GDP + phosphate. It participates in carbohydrate metabolism; tricarboxylic acid cycle; succinate from succinyl-CoA (ligase route): step 1/1. In terms of biological role, succinyl-CoA synthetase functions in the citric acid cycle (TCA), coupling the hydrolysis of succinyl-CoA to the synthesis of either ATP or GTP and thus represents the only step of substrate-level phosphorylation in the TCA. The beta subunit provides nucleotide specificity of the enzyme and binds the substrate succinate, while the binding sites for coenzyme A and phosphate are found in the alpha subunit. This Staphylococcus saprophyticus subsp. saprophyticus (strain ATCC 15305 / DSM 20229 / NCIMB 8711 / NCTC 7292 / S-41) protein is Succinate--CoA ligase [ADP-forming] subunit beta.